A 148-amino-acid polypeptide reads, in one-letter code: uncharacterized protein (148 aa).

A disordered region spans residues 1–108 (MGRAGPRSTA…PSRLRGKRSL (108 aa)). A compositionally biased stretch (basic residues) spans 22-42 (RRPRPWQKPTSPRRLHRRRPR). Residues 88–97 (DTSASNPSQR) show a composition bias toward polar residues.

This is an uncharacterized protein from Homo sapiens (Human).